The following is a 721-amino-acid chain: Polyribonucleotide nucleotidyltransferase (721 aa).

Residues D495 and D501 each coordinate Mg(2+). In terms of domain architecture, KH spans 562 to 621; sequence PRITTIKIRPERIKDIIGPGGKTIKDITARTGTSINIEDDGSVSIASPNQDKVEEAIKMI. Residues 631-699 form the S1 motif domain; that stretch reads GRIYLGTVRK…RSGKIRLSRK (69 aa). Residues 699–721 form a disordered region; sequence KEALADSAKKSEGTEPPKGEPAK.

This sequence belongs to the polyribonucleotide nucleotidyltransferase family. The cofactor is Mg(2+).

It is found in the cytoplasm. The catalysed reaction is RNA(n+1) + phosphate = RNA(n) + a ribonucleoside 5'-diphosphate. Involved in mRNA degradation. Catalyzes the phosphorolysis of single-stranded polyribonucleotides processively in the 3'- to 5'-direction. This chain is Polyribonucleotide nucleotidyltransferase, found in Anaeromyxobacter sp. (strain K).